The sequence spans 152 residues: Ribosome maturation factor RimP (152 aa).

The protein belongs to the RimP family.

Its subcellular location is the cytoplasm. In terms of biological role, required for maturation of 30S ribosomal subunits. The chain is Ribosome maturation factor RimP from Desulfitobacterium hafniense (strain Y51).